The following is a 314-amino-acid chain: MSDKILVFGHQKPDTDAIGSSYGFSYLSNHRPNGALNTEVVALGTPNEETQFVLDYFGVKAPRVVKSAKEEGVDTVILTDHNEFQQSISDIEDLTIYGVVDHHRVANFNTAAPLFMTVEPVGSASSIVYRKFLEANVEIPKEVAGLLLSGLISDTLLLKSPTTHVTDHKVAKELAEIAGVNLEEYGLAMLKAGTNLSTKTAEELIDIDAKTFELNGSNVRIAQVNTVDIPEVLERLSDIKAAINASMTANGYDDFVFMITDIVNSNSEIIALGAHPEKSEAAFNFTLADDHAFLAGAVSRKKQVVPQLTESFNK.

6 residues coordinate Mn(2+): H10, D14, D16, D80, H102, and D154.

This sequence belongs to the PPase class C family. Mn(2+) serves as cofactor.

Its subcellular location is the cytoplasm. It carries out the reaction diphosphate + H2O = 2 phosphate + H(+). The sequence is that of Probable manganese-dependent inorganic pyrophosphatase (ppaC) from Lactococcus lactis subsp. lactis (strain IL1403) (Streptococcus lactis).